A 310-amino-acid polypeptide reads, in one-letter code: Cytochrome f (310 aa).

Positions 1 to 26 are cleaved as a signal peptide; it reads MNIKLTLLVLISIINLMIIQPIQTLA. Heme is bound by residues Phe27, Cys47, Cys50, and His51. A helical transmembrane segment spans residues 276-296; that stretch reads IKGMIVFFFTVTIAQIFFVLK.

It belongs to the cytochrome f family. In terms of assembly, the 4 large subunits of the cytochrome b6-f complex are cytochrome b6, subunit IV (17 kDa polypeptide, petD), cytochrome f and the Rieske protein, while the 4 small subunits are PetG, PetL, PetM and PetN. The complex functions as a dimer. It depends on heme as a cofactor.

The protein resides in the plastid. The protein localises to the chloroplast thylakoid membrane. Functionally, component of the cytochrome b6-f complex, which mediates electron transfer between photosystem II (PSII) and photosystem I (PSI), cyclic electron flow around PSI, and state transitions. The chain is Cytochrome f from Gracilaria tenuistipitata var. liui (Red alga).